The chain runs to 426 residues: Serine--tRNA ligase (426 aa).

Thr-229 to Glu-231 contacts L-serine. Arg-260–Glu-262 is a binding site for ATP. L-serine is bound at residue Glu-283. Position 347 to 350 (Glu-347 to Ser-350) interacts with ATP. Ser-383 contacts L-serine.

This sequence belongs to the class-II aminoacyl-tRNA synthetase family. Type-1 seryl-tRNA synthetase subfamily. As to quaternary structure, homodimer. The tRNA molecule binds across the dimer.

Its subcellular location is the cytoplasm. The catalysed reaction is tRNA(Ser) + L-serine + ATP = L-seryl-tRNA(Ser) + AMP + diphosphate + H(+). It catalyses the reaction tRNA(Sec) + L-serine + ATP = L-seryl-tRNA(Sec) + AMP + diphosphate + H(+). Its pathway is aminoacyl-tRNA biosynthesis; selenocysteinyl-tRNA(Sec) biosynthesis; L-seryl-tRNA(Sec) from L-serine and tRNA(Sec): step 1/1. Its function is as follows. Catalyzes the attachment of serine to tRNA(Ser). Is also able to aminoacylate tRNA(Sec) with serine, to form the misacylated tRNA L-seryl-tRNA(Sec), which will be further converted into selenocysteinyl-tRNA(Sec). This Rickettsia bellii (strain RML369-C) protein is Serine--tRNA ligase.